The following is a 303-amino-acid chain: Taste receptor type 2 member 13 (303 aa).

Topologically, residues 1–7 (MESALLS) are extracellular. A helical transmembrane segment spans residues 8-28 (ILTLVIIAEFVIGNLSNGFXV). At 29 to 55 (LINCIDWVSKRQLSSVDKILTFLAISR) the chain is on the cytoplasmic side. The helical transmembrane segment at 56-76 (IGLIWELLVSWFLGLHYLAIF) threads the bilayer. Residues 77-85 (VSGTGLRIM) lie on the Extracellular side of the membrane. Residues 86-106 (IFSWVVSNHFSLWLATILSIF) traverse the membrane as a helical segment. Residues 107-128 (YLLKIASFSSPAFLYLKWRVNQ) lie on the Cytoplasmic side of the membrane. Residues 129 to 149 (VILMILLGTLVFLFLNLIQIN) traverse the membrane as a helical segment. At 150-184 (IHIKDWLDRCERNTIWNFSMSGLPTFSVPVKFTMT) the chain is on the extracellular side. Asn-166 carries an N-linked (GlcNAc...) asparagine glycan. A helical membrane pass occupies residues 185–205 (MFSLAPFTVALISFLLLIFSL). At 206-232 (RKHLQKMQLNYKGHREPRTKAHINALK) the chain is on the cytoplasmic side. Residues 233-253 (IVISFLLLYASFFLCILISWI) traverse the membrane as a helical segment. The Extracellular portion of the chain corresponds to 254–261 (SELYQNTL). A helical transmembrane segment spans residues 262–282 (IHMFCQTIGVFYPSSHSFLLI). At 283-303 (LGNPKLRQASLLVAAKVWAKR) the chain is on the cytoplasmic side.

The protein belongs to the G-protein coupled receptor T2R family.

The protein resides in the membrane. Receptor that may play a role in the perception of bitterness and is gustducin-linked. May play a role in sensing the chemical composition of the gastrointestinal content. The activity of this receptor may stimulate alpha gustducin, mediate PLC-beta-2 activation and lead to the gating of TRPM5. In Papio hamadryas (Hamadryas baboon), this protein is Taste receptor type 2 member 13 (TAS2R13).